Reading from the N-terminus, the 61-residue chain is Metallothionein-2E (61 aa).

Position 1 is an N-acetylmethionine (Met-1). A beta region spans residues 1–29 (MDPNCSCATRDSCACASSCKCKECKCTSC). Residues Cys-5, Cys-7, Cys-13, Cys-15, Cys-19, Cys-21, Cys-24, Cys-26, Cys-29, Cys-33, Cys-34, Cys-36, Cys-37, Cys-41, Cys-44, Cys-48, Cys-50, Cys-57, Cys-59, and Cys-60 each coordinate a divalent metal cation. The interval 30–61 (KKSCCSCCPAGCTKCAQGCICKGALDKCSCCA) is alpha.

It belongs to the metallothionein superfamily. Type 1 family. In terms of assembly, monomer.

Functionally, metallothioneins have a high content of cysteine residues that bind various heavy metals; these proteins are transcriptionally regulated by both heavy metals and glucocorticoids. This chain is Metallothionein-2E, found in Oryctolagus cuniculus (Rabbit).